Consider the following 509-residue polypeptide: Tyrosine-protein kinase Lck (509 aa).

Gly2 is lipidated: N-myristoyl glycine. An interactions with CD4 and CD8 region spans residues 2–72; sequence GCGCSSHPED…DNLVIALHSY (71 aa). 2 S-palmitoyl cysteine lipidation sites follow: Cys3 and Cys5. The region spanning 61–121 is the SH3 domain; it reads LQDNLVIALH…PFNFVAKANS (61 aa). Lys99 is covalently cross-linked (Glycyl lysine isopeptide (Lys-Gly) (interchain with G-Cter in ubiquitin)). Ser102 bears the Phosphoserine mark. The 98-residue stretch at 127 to 224 folds into the SH2 domain; it reads WFFKNLSRKD…GLCTRLSRPC (98 aa). Residues 154–242 form an interaction with PTPRH region; sequence RESESTAGSF…WWEDEWEVPR (89 aa). Phosphothreonine is present on Thr159. Ser162 is subject to Phosphoserine. Tyr192 carries the post-translational modification Phosphotyrosine. A Phosphoserine modification is found at Ser194. The Protein kinase domain maps to 245–498; that stretch reads LKLVERLGAG…YLRSVLEDFF (254 aa). ATP-binding positions include 251–259 and Lys273; that span reads LGAGQFGEV. A Glycyl lysine isopeptide (Lys-Gly) (interchain with G-Cter in ubiquitin) cross-link involves residue Lys276. Catalysis depends on Asp364, which acts as the Proton acceptor. At Tyr394 the chain carries Phosphotyrosine; by autocatalysis. Tyr505 carries the phosphotyrosine; by CSK modification.

Belongs to the protein kinase superfamily. Tyr protein kinase family. SRC subfamily. As to quaternary structure, binds to the cytoplasmic domain of cell surface receptors, such as AXL, CD2, CD4, CD5, CD8, CD44, CD45 and CD122. Also binds to effector molecules, such as PI4K, VAV1, RASA1, FYB1 and to other protein kinases including CDK1, RAF1, ZAP70 and SYK. Binds to phosphatidylinositol 3'-kinase (PI3K) from T-lymphocytes through its SH3 domain and to the tyrosine phosphorylated form of KHDRBS1/p70 through its SH2 domain. Interacts with SQSTM1. Interacts with phosphorylated LIME1. LIME1. Interacts with CBLB and PTPRH. Interacts with RUNX3. Forms a signaling complex with EPHA1, PTK2B and PI3-KINASE; upon activation by EFNA1 which may regulate T-lymphocytes migration. Associates with ZAP70 and RHOH; these interactions allow LCK-mediated RHOH and CD3 subunit phosphorylation in the presence of functional ZAP70. Interacts with CEACAM1 (via cytoplasmic domain); mediates CEACAM1 phosphorylation resulting in PTPN6 recruitment that dephosphorylates TCR stimulation-induced CD247 and ZAP70. Interacts with CD160. Interacts with CD48. Post-translationally, autophosphorylated on Tyr-394, increasing enzymatic activity, this site is dephosphorylated by PTN22. Phosphorylated on Tyr-505 by CSK, decreasing activity. Dephosphorylated by PTPRC/CD45. Dephosphorylation at Tyr-394 by PTPN2 negatively regulates T-cells differentiation. Dephosphorylation at Tyr-394 by DUSP22 negatively regulates T-cell receptor signaling. In terms of processing, myristoylation is required prior to palmitoylation. Palmitoylation regulates association with the plasma membrane and could be mediated by ZDHHC2. Post-translationally, 'Lys-63'-linked ubiquitinated at Lys-99 and Lys-276 by UBR2; this modification is required for autophosphorylation at Tyr-394.

It is found in the cell membrane. It localises to the cytoplasm. The protein resides in the cytosol. The catalysed reaction is L-tyrosyl-[protein] + ATP = O-phospho-L-tyrosyl-[protein] + ADP + H(+). With respect to regulation, the relative activities of the inhibitory tyrosine-protein kinase CSK and the activating tyrosine-protein phosphatase PTPRC/CD45 determine the level of LCK activity. These interactions allow rapid and efficient activation of LCK in response to TCR stimulation. Functionally, non-receptor tyrosine-protein kinase that plays an essential role in the selection and maturation of developing T-cells in the thymus and in the function of mature T-cells. Plays a key role in T-cell antigen receptor (TCR)-linked signal transduction pathways. Constitutively associated with the cytoplasmic portions of the CD4 and CD8 surface receptors. Association of the TCR with a peptide antigen-bound MHC complex facilitates the interaction of CD4 and CD8 with MHC class II and class I molecules, respectively, thereby recruiting the associated LCK protein to the vicinity of the TCR/CD3 complex. LCK then phosphorylates tyrosine residues within the immunoreceptor tyrosine-based activation motifs (ITAM) of the cytoplasmic tails of the TCR-gamma chains and CD3 subunits, initiating the TCR/CD3 signaling pathway. Once stimulated, the TCR recruits the tyrosine kinase ZAP70, that becomes phosphorylated and activated by LCK. Following this, a large number of signaling molecules are recruited, ultimately leading to lymphokine production. LCK also contributes to signaling by other receptor molecules. Associates directly with the cytoplasmic tail of CD2, which leads to hyperphosphorylation and activation of LCK. Also plays a role in the IL2 receptor-linked signaling pathway that controls the T-cell proliferative response. Binding of IL2 to its receptor results in increased activity of LCK. Is expressed at all stages of thymocyte development and is required for the regulation of maturation events that are governed by both pre-TCR and mature alpha beta TCR. Phosphorylates other substrates including RUNX3, PTK2B/PYK2, the microtubule-associated protein MAPT, RHOH or TYROBP. Interacts with UNC119; this interaction plays a crucial role in activation of LCK. This chain is Tyrosine-protein kinase Lck (LCK), found in Aotus nancymaae (Ma's night monkey).